A 104-amino-acid chain; its full sequence is Probable RNA-binding protein PA4753 (104 aa).

Positions 1–97 (MALTQEQKKQ…NPKPNKNLSN (97 aa)) constitute a CRM domain.

In Pseudomonas aeruginosa (strain ATCC 15692 / DSM 22644 / CIP 104116 / JCM 14847 / LMG 12228 / 1C / PRS 101 / PAO1), this protein is Probable RNA-binding protein PA4753.